The following is a 166-amino-acid chain: PR-toxin biosynthesis cluster protein 10 (166 aa).

Its function is as follows. Part of the gene cluster that mediates the biosynthesis of PR-toxin, a bicyclic sesquiterpene belonging to the eremophilane class and acting as a mycotoxin. The first step of the pathway is catalyzed by the aristolochene synthase which performs the cyclization of trans,trans-farnesyl diphosphate (FPP) to the bicyclic sesquiterpene aristolochene. Following the formation of aristolochene, the non-oxygenated aristolochene is converted to the trioxygenated intermediate eremofortin B, via 7-epi-neopetasone. This conversion appears to involve three enzymes, a hydroxysterol oxidase-like enzyme, the quinone-oxidase prx3 that forms the quinone-type-structure in the bicyclic nucleus of aristolochene with the C8-oxo group and the C-3 hydroxyl group, and the P450 monooxygenase prx9 that introduces the epoxide at the double bond between carbons 1 and 2. No monoxy or dioxy-intermediates have been reported to be released to the broth, so these three early oxidative reactions may be coupled together. Eremofortin B is further oxidized by another P450 monooxygenase, that introduces a second epoxide between carbons 7 and 11 prior to acetylation to eremofortin A by the acetyltransferase prx11. The second epoxidation may be performed by a second P450 monooxygenase. After the acetylation step, eremofortin A is converted to eremofortin C and then to PR-toxin. First the conversion of eremofortin A to eremofortin C proceeds by oxidation of the side chain of the molecule at C-12 and is catalyzed by the short-chain oxidoreductase prx1. The cytochrome P450 monooxygenase prx8 also plays a role in this step. The primary alcohol formed at C-12 is finally oxidized by the short-chain alcohol dehydrogenase prx4 that forms PR-toxin. The protein is PR-toxin biosynthesis cluster protein 10 of Penicillium rubens (strain ATCC 28089 / DSM 1075 / NRRL 1951 / Wisconsin 54-1255) (Penicillium chrysogenum).